The sequence spans 217 residues: ATP phosphoribosyltransferase (217 aa).

It belongs to the ATP phosphoribosyltransferase family. Short subfamily. Heteromultimer composed of HisG and HisZ subunits.

It localises to the cytoplasm. It catalyses the reaction 1-(5-phospho-beta-D-ribosyl)-ATP + diphosphate = 5-phospho-alpha-D-ribose 1-diphosphate + ATP. It functions in the pathway amino-acid biosynthesis; L-histidine biosynthesis; L-histidine from 5-phospho-alpha-D-ribose 1-diphosphate: step 1/9. Catalyzes the condensation of ATP and 5-phosphoribose 1-diphosphate to form N'-(5'-phosphoribosyl)-ATP (PR-ATP). Has a crucial role in the pathway because the rate of histidine biosynthesis seems to be controlled primarily by regulation of HisG enzymatic activity. In Burkholderia orbicola (strain MC0-3), this protein is ATP phosphoribosyltransferase.